The following is a 145-amino-acid chain: Small ribosomal subunit protein eS12A (145 aa).

It belongs to the eukaryotic ribosomal protein eS12 family. In terms of assembly, component of the small ribosomal subunit (SSU). Mature yeast ribosomes consist of a small (40S) and a large (60S) subunit. The 40S small subunit contains 1 molecule of ribosomal RNA (18S rRNA) and at least 33 different proteins. The large 60S subunit contains 3 rRNA molecules (25S, 5.8S and 5S rRNA) and at least 46 different proteins.

Its subcellular location is the cytoplasm. Its function is as follows. Component of the ribosome, a large ribonucleoprotein complex responsible for the synthesis of proteins in the cell. The small ribosomal subunit (SSU) binds messenger RNAs (mRNAs) and translates the encoded message by selecting cognate aminoacyl-transfer RNA (tRNA) molecules. The large subunit (LSU) contains the ribosomal catalytic site termed the peptidyl transferase center (PTC), which catalyzes the formation of peptide bonds, thereby polymerizing the amino acids delivered by tRNAs into a polypeptide chain. The nascent polypeptides leave the ribosome through a tunnel in the LSU and interact with protein factors that function in enzymatic processing, targeting, and the membrane insertion of nascent chains at the exit of the ribosomal tunnel. The chain is Small ribosomal subunit protein eS12A (rps1201) from Schizosaccharomyces pombe (strain 972 / ATCC 24843) (Fission yeast).